The chain runs to 239 residues: Uridylate kinase (239 aa).

13-16 serves as a coordination point for ATP; the sequence is KVSG. UMP is bound at residue glycine 55. ATP contacts are provided by glycine 56 and arginine 60. Residues aspartate 75 and 136–143 each bind UMP; that span reads TGNPFFTT. ATP is bound by residues threonine 163, glutamine 164, tyrosine 169, and aspartate 172.

The protein belongs to the UMP kinase family. In terms of assembly, homohexamer.

The protein resides in the cytoplasm. The enzyme catalyses UMP + ATP = UDP + ADP. It functions in the pathway pyrimidine metabolism; CTP biosynthesis via de novo pathway; UDP from UMP (UMPK route): step 1/1. Its activity is regulated as follows. Inhibited by UTP. Functionally, catalyzes the reversible phosphorylation of UMP to UDP. In Bartonella quintana (strain Toulouse) (Rochalimaea quintana), this protein is Uridylate kinase.